The primary structure comprises 1281 residues: Enterobactin synthase component F (1281 aa).

The interval 1 to 301 (MSQHLPLVAA…NVLPLGIHIA (301 aa)) is elongation/condensation. Residues 486-891 (SYREMHEQVV…ALPDVKQAVT (406 aa)) are adenylation. The 76-residue stretch at 975 to 1050 (APKAGSETII…KLATIIDGEE (76 aa)) folds into the Carrier domain. S1010 carries the O-(pantetheine 4'-phosphoryl)serine modification. Positions 1070–1281 (PTLFCFHPAS…GPIIRATLNR (212 aa)) are thioesterase. H1259 serves as the catalytic Proton acceptor; for thioesterase activity.

Belongs to the ATP-dependent AMP-binding enzyme family. EntF subfamily. In terms of assembly, proteins EntB, EntD, EntE and EntF are the component of the enterobactin synthase. Components probably do not form a stable complex. EntF acts as a catalytic monomer. It depends on pantetheine 4'-phosphate as a cofactor. In terms of processing, 4'-phosphopantetheine is transferred from CoA to a specific serine of apo-EntF by EntD. Holo-EntF so formed is then acylated with seryl-AMP.

It localises to the cytoplasm. It carries out the reaction 3 2,3-dihydroxybenzoate + 3 L-serine + 6 ATP = enterobactin + 6 AMP + 6 diphosphate + 4 H(+). The enzyme catalyses holo-[peptidyl-carrier protein] + L-serine + ATP = L-seryl-[peptidyl-carrier protein] + AMP + diphosphate. The protein operates within siderophore biosynthesis; enterobactin biosynthesis. Involved in the biosynthesis of the siderophore enterobactin (enterochelin), which is a macrocyclic trimeric lactone of N-(2,3-dihydroxybenzoyl)-serine. EntF catalyzes the activation of L-serine via ATP-dependent PPi exchange reaction to form seryladenylate. Activated L-serine is loaded onto the peptidyl carrier domain via a thioester linkage to the phosphopanthetheine moiety, forming seryl-S-Ppant-EntF. EntF acts then as the sole catalyst for the formation of the three amide and three ester linkages found in enterobactin, using seryladenylate and 2,3-dihydroxybenzoate-S-Ppant-EntB (DHB-S-Ppant-EntB) as substrates, via the formation of a DHB-Ser-S-Ppant-EntF intermediate. The sequence is that of Enterobactin synthase component F (entF) from Shigella flexneri.